The primary structure comprises 278 residues: D-arabinitol 2-dehydrogenase [ribulose-forming] (278 aa).

Positions 28 and 49 each coordinate NADP(+). The active-site Proton donor is serine 166. Tyrosine 181, lysine 185, isoleucine 214, and threonine 216 together coordinate NADP(+). Tyrosine 181 (proton acceptor) is an active-site residue. The active-site Lowers pKa of active site Tyr is lysine 185.

The protein belongs to the short-chain dehydrogenases/reductases (SDR) family.

It carries out the reaction D-arabinitol + NAD(+) = D-ribulose + NADH + H(+). Its pathway is carbohydrate metabolism; D-arabinitol metabolism. This Scheffersomyces stipitis (strain ATCC 58785 / CBS 6054 / NBRC 10063 / NRRL Y-11545) (Yeast) protein is D-arabinitol 2-dehydrogenase [ribulose-forming] (ARDH).